Consider the following 466-residue polypeptide: Uronate isomerase (466 aa).

It belongs to the metallo-dependent hydrolases superfamily. Uronate isomerase family.

The enzyme catalyses D-glucuronate = D-fructuronate. It catalyses the reaction aldehydo-D-galacturonate = keto-D-tagaturonate. Its pathway is carbohydrate metabolism; pentose and glucuronate interconversion. This is Uronate isomerase from Streptococcus pneumoniae (strain 70585).